The chain runs to 222 residues: 2-C-methyl-D-erythritol 4-phosphate cytidylyltransferase (222 aa).

This sequence belongs to the IspD/TarI cytidylyltransferase family. IspD subfamily.

The enzyme catalyses 2-C-methyl-D-erythritol 4-phosphate + CTP + H(+) = 4-CDP-2-C-methyl-D-erythritol + diphosphate. It functions in the pathway isoprenoid biosynthesis; isopentenyl diphosphate biosynthesis via DXP pathway; isopentenyl diphosphate from 1-deoxy-D-xylulose 5-phosphate: step 2/6. Its function is as follows. Catalyzes the formation of 4-diphosphocytidyl-2-C-methyl-D-erythritol from CTP and 2-C-methyl-D-erythritol 4-phosphate (MEP). This chain is 2-C-methyl-D-erythritol 4-phosphate cytidylyltransferase, found in Porphyromonas gingivalis (strain ATCC 33277 / DSM 20709 / CIP 103683 / JCM 12257 / NCTC 11834 / 2561).